The chain runs to 614 residues: Chaperone protein DnaK (614 aa).

Threonine 173 carries the phosphothreonine; by autocatalysis modification. 2 stretches are compositionally biased toward basic and acidic residues: residues 490-509 (EENAEADKKRREESDLRNEA) and 529-542 (EEDKQNAEDKKEAL). Disordered regions lie at residues 490–510 (EENAEADKKRREESDLRNEAD), 524–555 (GENISEEDKQNAEDKKEALKSALEGEDIDDIK), and 575–614 (QAAQAQQQAQGEDANASQDSNVEDADFKEVKDDDNQDNQK). The span at 575–584 (QAAQAQQQAQ) shows a compositional bias: low complexity. Positions 599 to 614 (ADFKEVKDDDNQDNQK) are enriched in basic and acidic residues.

This sequence belongs to the heat shock protein 70 family.

In terms of biological role, acts as a chaperone. The chain is Chaperone protein DnaK from Staphylococcus saprophyticus subsp. saprophyticus (strain ATCC 15305 / DSM 20229 / NCIMB 8711 / NCTC 7292 / S-41).